The following is a 268-amino-acid chain: MICOS complex subunit MIC27 (268 aa).

A mitochondrion-targeting transit peptide spans 1–27 (MAAIRMGKLTTMPAGLIYASVSVHAAK). At 28 to 110 (QEESKKQLVK…YVYLKNPPRD (83 aa)) the chain is on the mitochondrial intermembrane side. A helical membrane pass occupies residues 111–129 (FLPKMGVITVSGLAGLVSA). Over 130–137 (RKGSKFKK) the chain is Mitochondrial matrix. A helical transmembrane segment spans residues 138 to 155 (ITYPLGLATLGATVCYPV). Residues 156–268 (QSVIIAKVTA…EDIDMYSTRS (113 aa)) are Mitochondrial intermembrane-facing. Basic and acidic residues predominate over residues 187–200 (SKEESLPKPKEKTK). Positions 187-268 (SKEESLPKPK…EDIDMYSTRS (82 aa)) are disordered. Residue Ser-204 is modified to Phosphoserine. Residues 249–260 (KLMDHGQSHPED) are compositionally biased toward basic and acidic residues.

This sequence belongs to the apolipoprotein O/MICOS complex subunit Mic27 family. As to quaternary structure, component of the mitochondrial contact site and cristae organizing system (MICOS) complex, composed of at least MICOS10/MIC10, CHCHD3/MIC19, CHCHD6/MIC25, APOOL/MIC27, IMMT/MIC60, APOO/MIC23/MIC26 and MICOS13/MIC13. This complex was also known under the names MINOS or MitOS complex. The MICOS complex associates with mitochondrial outer membrane proteins SAMM50, MTX1 and MTX2 (together described as components of the mitochondrial outer membrane sorting assembly machinery (SAM) complex) and DNAJC11, mitochondrial inner membrane protein TMEM11 and with HSPA9. The MICOS and SAM complexes together with DNAJC11 are part of a large protein complex spanning both membranes termed the mitochondrial intermembrane space bridging (MIB) complex. Interacts with MICOS10/MIC10, IMMT/MIC60 and APOO/MIC23/MIC26.

It is found in the mitochondrion inner membrane. Its subcellular location is the mitochondrion. In terms of biological role, component of the MICOS complex, a large protein complex of the mitochondrial inner membrane that plays crucial roles in the maintenance of crista junctions, inner membrane architecture, and formation of contact sites to the outer membrane. Specifically binds to cardiolipin (in vitro) but not to the precursor lipid phosphatidylglycerol. Plays a crucial role in crista junction formation and mitochondrial function,. The protein is MICOS complex subunit MIC27 (APOOL) of Homo sapiens (Human).